A 123-amino-acid chain; its full sequence is Small ribosomal subunit protein uS17 (123 aa).

It belongs to the universal ribosomal protein uS17 family. Part of the 30S ribosomal subunit.

In terms of biological role, one of the primary rRNA binding proteins, it binds specifically to the 5'-end of 16S ribosomal RNA. The protein is Small ribosomal subunit protein uS17 of Pyrobaculum aerophilum (strain ATCC 51768 / DSM 7523 / JCM 9630 / CIP 104966 / NBRC 100827 / IM2).